The chain runs to 177 residues: Large ribosomal subunit protein uL10 (177 aa).

This sequence belongs to the universal ribosomal protein uL10 family. Part of the ribosomal stalk of the 50S ribosomal subunit. The N-terminus interacts with L11 and the large rRNA to form the base of the stalk. The C-terminus forms an elongated spine to which L12 dimers bind in a sequential fashion forming a multimeric L10(L12)X complex.

In terms of biological role, forms part of the ribosomal stalk, playing a central role in the interaction of the ribosome with GTP-bound translation factors. The chain is Large ribosomal subunit protein uL10 from Caldanaerobacter subterraneus subsp. tengcongensis (strain DSM 15242 / JCM 11007 / NBRC 100824 / MB4) (Thermoanaerobacter tengcongensis).